A 721-amino-acid chain; its full sequence is YTH domain-containing protein 1 (721 aa).

Positions Glu29–Asp38 are enriched in acidic residues. A disordered region spans residues Glu29–Lys239. The span at Ser48 to Ser75 shows a compositional bias: low complexity. Residues Ala135 to Pro151 are compositionally biased toward basic and acidic residues. The 138-residue stretch at Thr254–Phe391 folds into the YTH domain. Residues Lys260–Asn262, Trp276, and Trp327 contribute to the RNA site. Disordered stretches follow at residues Pro424 to His471, Asp580 to Pro605, and Ala651 to Arg721. The segment covering Gly432 to Gly443 has biased composition (gly residues). Residues Pro451 to His471 show a composition bias toward basic residues. Residues Gly583–Gly600 show a composition bias toward pro residues. Over residues Ala651–Gly670 the composition is skewed to gly residues. Over residues Arg699–Gly708 the composition is skewed to basic and acidic residues.

Its subcellular location is the nucleus. Its function is as follows. Regulator of alternative splicing that specifically recognizes and binds N6-methyladenosine (m6A)-containing RNAs. Acts by acting as a reader of m6A methylation. Required for sex determination and dosage compensation via Sxl alternative splicing: m6A methylation acts as a key regulator of Sxl pre-mRNA and promotes female-specific alternative splicing of Sxl, which determines female physiognomy. M6A methylation is also required for neuronal functions. The chain is YTH domain-containing protein 1 from Drosophila melanogaster (Fruit fly).